Consider the following 411-residue polypeptide: Multidrug resistance protein MdtA (411 aa).

An N-terminal signal peptide occupies residues Met-1–Ala-26. Positions Ser-35–Gly-55 are enriched in polar residues. A disordered region spans residues Ser-35–Val-64.

It belongs to the membrane fusion protein (MFP) (TC 8.A.1) family. As to quaternary structure, part of a tripartite efflux system composed of MdtA, MdtB and MdtC.

It is found in the cell inner membrane. The sequence is that of Multidrug resistance protein MdtA from Proteus mirabilis (strain HI4320).